Reading from the N-terminus, the 500-residue chain is Cytochrome P450 2D14 (500 aa).

Position 446 (cysteine 446) interacts with heme.

This sequence belongs to the cytochrome P450 family. Heme is required as a cofactor.

It is found in the endoplasmic reticulum membrane. It localises to the microsome membrane. The catalysed reaction is an organic molecule + reduced [NADPH--hemoprotein reductase] + O2 = an alcohol + oxidized [NADPH--hemoprotein reductase] + H2O + H(+). Its function is as follows. Cytochromes P450 are a group of heme-thiolate monooxygenases. In liver microsomes, this enzyme is involved in an NADPH-dependent electron transport pathway. It oxidizes a variety of structurally unrelated compounds, including steroids, fatty acids, and xenobiotics. The polypeptide is Cytochrome P450 2D14 (CYP2D14) (Bos taurus (Bovine)).